The primary structure comprises 631 residues: Phosphomethylpyrimidine synthase (631 aa).

Substrate-binding positions include N239, M268, Y297, H333, 353-355 (SRG), 394-397 (DGLR), and E433. H437 contacts Zn(2+). A substrate-binding site is contributed by Y460. H501 lines the Zn(2+) pocket. [4Fe-4S] cluster contacts are provided by C581, C584, and C589.

It belongs to the ThiC family. In terms of assembly, homodimer. Requires [4Fe-4S] cluster as cofactor.

It carries out the reaction 5-amino-1-(5-phospho-beta-D-ribosyl)imidazole + S-adenosyl-L-methionine = 4-amino-2-methyl-5-(phosphooxymethyl)pyrimidine + CO + 5'-deoxyadenosine + formate + L-methionine + 3 H(+). It functions in the pathway cofactor biosynthesis; thiamine diphosphate biosynthesis. Functionally, catalyzes the synthesis of the hydroxymethylpyrimidine phosphate (HMP-P) moiety of thiamine from aminoimidazole ribotide (AIR) in a radical S-adenosyl-L-methionine (SAM)-dependent reaction. This chain is Phosphomethylpyrimidine synthase, found in Salmonella arizonae (strain ATCC BAA-731 / CDC346-86 / RSK2980).